The chain runs to 344 residues: Arginine N-succinyltransferase (344 aa).

A succinyl-CoA-binding site is contributed by L125. H229 acts as the Proton donor in catalysis.

Belongs to the arginine N-succinyltransferase family.

The enzyme catalyses succinyl-CoA + L-arginine = N(2)-succinyl-L-arginine + CoA + H(+). The protein operates within amino-acid degradation; L-arginine degradation via AST pathway; L-glutamate and succinate from L-arginine: step 1/5. Catalyzes the transfer of succinyl-CoA to arginine to produce N(2)-succinylarginine. This chain is Arginine N-succinyltransferase, found in Escherichia coli O6:K15:H31 (strain 536 / UPEC).